The following is a 278-amino-acid chain: tRNA pseudouridine synthase A (278 aa).

D61 functions as the Nucleophile in the catalytic mechanism. Substrate is bound at residue Y119.

The protein belongs to the tRNA pseudouridine synthase TruA family. As to quaternary structure, homodimer.

The enzyme catalyses uridine(38/39/40) in tRNA = pseudouridine(38/39/40) in tRNA. Formation of pseudouridine at positions 38, 39 and 40 in the anticodon stem and loop of transfer RNAs. This is tRNA pseudouridine synthase A from Oleidesulfovibrio alaskensis (strain ATCC BAA-1058 / DSM 17464 / G20) (Desulfovibrio alaskensis).